We begin with the raw amino-acid sequence, 81 residues long: MQNDAGEFVDLYVPRKCSASNRIIGAKDHASIQINIAEVDRVTGRFNGQFKTYAICGAIRRMGEADDSLLRLAKTDSIVAK.

Belongs to the eukaryotic ribosomal protein eS21 family. In terms of assembly, component of the 40S small ribosomal subunit.

It is found in the cytoplasm. It localises to the cytosol. Its subcellular location is the rough endoplasmic reticulum. In terms of biological role, component of the small ribosomal subunit. The ribosome is a large ribonucleoprotein complex responsible for the synthesis of proteins in the cell. In Danio rerio (Zebrafish), this protein is Small ribosomal subunit protein eS21 (rps21).